The sequence spans 504 residues: Anaerobic nitric oxide reductase transcription regulator NorR (504 aa).

Residue Asp-57 is modified to 4-aspartylphosphate. The region spanning 187–416 (MIGLSPGMTQ…LEHAIHRAVV (230 aa)) is the Sigma-54 factor interaction domain. ATP is bound by residues 215 to 222 (GETGTGKE) and 278 to 287 (ADNGTLFLDE). The segment at residues 479–498 (WAACARMLETDVANLHRLAK) is a DNA-binding region (H-T-H motif).

The protein operates within nitrogen metabolism; nitric oxide reduction. In terms of biological role, required for the expression of anaerobic nitric oxide (NO) reductase, acts as a transcriptional activator for at least the norVW operon. Activation also requires sigma-54. The protein is Anaerobic nitric oxide reductase transcription regulator NorR of Shigella dysenteriae serotype 1 (strain Sd197).